A 194-amino-acid chain; its full sequence is ATP-dependent Clp protease proteolytic subunit (194 aa).

Residue serine 98 is the Nucleophile of the active site. The active site involves histidine 123.

It belongs to the peptidase S14 family. As to quaternary structure, fourteen ClpP subunits assemble into 2 heptameric rings which stack back to back to give a disk-like structure with a central cavity, resembling the structure of eukaryotic proteasomes.

The protein resides in the cytoplasm. The enzyme catalyses Hydrolysis of proteins to small peptides in the presence of ATP and magnesium. alpha-casein is the usual test substrate. In the absence of ATP, only oligopeptides shorter than five residues are hydrolyzed (such as succinyl-Leu-Tyr-|-NHMec, and Leu-Tyr-Leu-|-Tyr-Trp, in which cleavage of the -Tyr-|-Leu- and -Tyr-|-Trp bonds also occurs).. Functionally, cleaves peptides in various proteins in a process that requires ATP hydrolysis. Has a chymotrypsin-like activity. Plays a major role in the degradation of misfolded proteins. In Acetivibrio thermocellus (strain ATCC 27405 / DSM 1237 / JCM 9322 / NBRC 103400 / NCIMB 10682 / NRRL B-4536 / VPI 7372) (Clostridium thermocellum), this protein is ATP-dependent Clp protease proteolytic subunit.